A 456-amino-acid chain; its full sequence is tRNA-2-methylthio-N(6)-dimethylallyladenosine synthase (456 aa).

The 118-residue stretch at 3–120 (KKVYVKTFGC…LPQMIDQRRA (118 aa)) folds into the MTTase N-terminal domain. [4Fe-4S] cluster is bound by residues cysteine 12, cysteine 49, cysteine 83, cysteine 157, cysteine 161, and cysteine 164. The Radical SAM core domain occupies 143-377 (RIDGPSAFVS…QATIEENVQR (235 aa)). One can recognise a TRAM domain in the interval 380–447 (QAMVGKVERI…PHSLRGELVM (68 aa)).

The protein belongs to the methylthiotransferase family. MiaB subfamily. In terms of assembly, monomer. Requires [4Fe-4S] cluster as cofactor.

It localises to the cytoplasm. The enzyme catalyses N(6)-dimethylallyladenosine(37) in tRNA + (sulfur carrier)-SH + AH2 + 2 S-adenosyl-L-methionine = 2-methylsulfanyl-N(6)-dimethylallyladenosine(37) in tRNA + (sulfur carrier)-H + 5'-deoxyadenosine + L-methionine + A + S-adenosyl-L-homocysteine + 2 H(+). Its function is as follows. Catalyzes the methylthiolation of N6-(dimethylallyl)adenosine (i(6)A), leading to the formation of 2-methylthio-N6-(dimethylallyl)adenosine (ms(2)i(6)A) at position 37 in tRNAs that read codons beginning with uridine. The sequence is that of tRNA-2-methylthio-N(6)-dimethylallyladenosine synthase from Paraburkholderia phymatum (strain DSM 17167 / CIP 108236 / LMG 21445 / STM815) (Burkholderia phymatum).